Here is a 173-residue protein sequence, read N- to C-terminus: Chromophore lyase CpcS/CpeS 3 (173 aa).

It belongs to the CpcS/CpeS biliprotein lyase family.

Its function is as follows. Covalently attaches a chromophore to Cys residue(s) of phycobiliproteins. The chain is Chromophore lyase CpcS/CpeS 3 from Trichodesmium erythraeum (strain IMS101).